Consider the following 124-residue polypeptide: Small ribosomal subunit protein uS13 (124 aa).

Residues 94–124 are disordered; it reads RGMPVRGQRTKTNARTRKGPKRTIAGKKKAR.

This sequence belongs to the universal ribosomal protein uS13 family. As to quaternary structure, part of the 30S ribosomal subunit. Forms a loose heterodimer with protein S19. Forms two bridges to the 50S subunit in the 70S ribosome.

Its function is as follows. Located at the top of the head of the 30S subunit, it contacts several helices of the 16S rRNA. In the 70S ribosome it contacts the 23S rRNA (bridge B1a) and protein L5 of the 50S subunit (bridge B1b), connecting the 2 subunits; these bridges are implicated in subunit movement. Contacts the tRNAs in the A and P-sites. The chain is Small ribosomal subunit protein uS13 from Mycobacterium tuberculosis (strain ATCC 25177 / H37Ra).